The chain runs to 177 residues: Large ribosomal subunit protein uL6 (177 aa).

A compositionally biased stretch (basic and acidic residues) spans 154 to 171; that stretch reads PEPYKGKGVRYADEQVRR. Residues 154-177 are disordered; the sequence is PEPYKGKGVRYADEQVRRKEAKKK.

Belongs to the universal ribosomal protein uL6 family. In terms of assembly, part of the 50S ribosomal subunit.

Functionally, this protein binds to the 23S rRNA, and is important in its secondary structure. It is located near the subunit interface in the base of the L7/L12 stalk, and near the tRNA binding site of the peptidyltransferase center. This Marinobacter nauticus (strain ATCC 700491 / DSM 11845 / VT8) (Marinobacter aquaeolei) protein is Large ribosomal subunit protein uL6.